Reading from the N-terminus, the 177-residue chain is MQASIQNRIFFGLVVLWSTTVLEPLRAIPRMDLNDYPQPIAGHQRWVIQLPGLLAKSSDPGLSTNAVDWRVQLIVGRTIQLVCNQYHLAGQGLRMERFQGAEQRMLYSVAGAVKVMSTRMVCPPDEPKRESFLVLGSKPYLVPYNASFPIVVDVPDGLEVRWRLWKAEITQREAIKL.

Positions 1-23 (MQASIQNRIFFGLVVLWSTTVLE) are cleaved as a signal peptide. C83 and C122 form a disulfide bridge.

Belongs to the protease inhibitor I11 (ecotin) family. In terms of assembly, homodimer.

It is found in the periplasm. Functionally, general inhibitor of family S1 serine proteases. In Prochlorococcus marinus (strain MIT 9313), this protein is Ecotin.